A 174-amino-acid chain; its full sequence is UPF0316 protein lwe1794 (174 aa).

3 helical membrane-spanning segments follow: residues 4-24 (GLFI…IYTV), 36-56 (LAAL…SLVL), and 62-82 (IANV…GMKI).

It belongs to the UPF0316 family.

The protein resides in the cell membrane. In Listeria welshimeri serovar 6b (strain ATCC 35897 / DSM 20650 / CCUG 15529 / CIP 8149 / NCTC 11857 / SLCC 5334 / V8), this protein is UPF0316 protein lwe1794.